A 145-amino-acid polypeptide reads, in one-letter code: uncharacterized protein (145 aa).

The first 29 residues, 1 to 29 (MHLIRAAGAVCLAVVLIAGCRFNEDQHQA), serve as a signal peptide directing secretion. Residues 67–101 (KNGTQEKAEIQDKLSGVNQEGEEALDEMKMILSEL) adopt a coiled-coil conformation.

This is an uncharacterized protein from Bacillus subtilis (strain 168).